Reading from the N-terminus, the 106-residue chain is Large ribosomal subunit protein eL30 (106 aa).

The protein belongs to the eukaryotic ribosomal protein eL30 family.

The chain is Large ribosomal subunit protein eL30 from Methanococcus maripaludis (strain C7 / ATCC BAA-1331).